Consider the following 475-residue polypeptide: Aspartyl/glutamyl-tRNA(Asn/Gln) amidotransferase subunit B (475 aa).

This sequence belongs to the GatB/GatE family. GatB subfamily. Heterotrimer of A, B and C subunits.

The catalysed reaction is L-glutamyl-tRNA(Gln) + L-glutamine + ATP + H2O = L-glutaminyl-tRNA(Gln) + L-glutamate + ADP + phosphate + H(+). It carries out the reaction L-aspartyl-tRNA(Asn) + L-glutamine + ATP + H2O = L-asparaginyl-tRNA(Asn) + L-glutamate + ADP + phosphate + 2 H(+). In terms of biological role, allows the formation of correctly charged Asn-tRNA(Asn) or Gln-tRNA(Gln) through the transamidation of misacylated Asp-tRNA(Asn) or Glu-tRNA(Gln) in organisms which lack either or both of asparaginyl-tRNA or glutaminyl-tRNA synthetases. The reaction takes place in the presence of glutamine and ATP through an activated phospho-Asp-tRNA(Asn) or phospho-Glu-tRNA(Gln). The sequence is that of Aspartyl/glutamyl-tRNA(Asn/Gln) amidotransferase subunit B from Staphylococcus carnosus (strain TM300).